Reading from the N-terminus, the 531-residue chain is Putative aldehyde dehydrogenase family 7 member A1 homolog (531 aa).

Position 264–269 (264–269 (GSSEIG)) interacts with NAD(+). Residue E286 is the Proton acceptor of the active site. The active-site Nucleophile is C320.

Belongs to the aldehyde dehydrogenase family. Homotetramer.

The enzyme catalyses an aldehyde + NAD(+) + H2O = a carboxylate + NADH + 2 H(+). The chain is Putative aldehyde dehydrogenase family 7 member A1 homolog (alh-9) from Caenorhabditis elegans.